Consider the following 568-residue polypeptide: Proline--tRNA ligase (568 aa).

This sequence belongs to the class-II aminoacyl-tRNA synthetase family. ProS type 1 subfamily. In terms of assembly, homodimer.

Its subcellular location is the cytoplasm. The catalysed reaction is tRNA(Pro) + L-proline + ATP = L-prolyl-tRNA(Pro) + AMP + diphosphate. Functionally, catalyzes the attachment of proline to tRNA(Pro) in a two-step reaction: proline is first activated by ATP to form Pro-AMP and then transferred to the acceptor end of tRNA(Pro). As ProRS can inadvertently accommodate and process non-cognate amino acids such as alanine and cysteine, to avoid such errors it has two additional distinct editing activities against alanine. One activity is designated as 'pretransfer' editing and involves the tRNA(Pro)-independent hydrolysis of activated Ala-AMP. The other activity is designated 'posttransfer' editing and involves deacylation of mischarged Ala-tRNA(Pro). The misacylated Cys-tRNA(Pro) is not edited by ProRS. The polypeptide is Proline--tRNA ligase (Nitrosomonas eutropha (strain DSM 101675 / C91 / Nm57)).